We begin with the raw amino-acid sequence, 314 residues long: Probable cell division protein WhiA (314 aa).

The segment at residues 274–305 is a DNA-binding region (H-T-H motif); that stretch reads SLAELGDRLEISKSGANHRMRKLKALEDMINA.

It belongs to the WhiA family.

Its function is as follows. Involved in cell division and chromosome segregation. The sequence is that of Probable cell division protein WhiA from Leuconostoc citreum (strain KM20).